A 100-amino-acid polypeptide reads, in one-letter code: Protein Tat (100 aa).

The tract at residues 1–24 (MDPIDPDLEPWKHPGSQPRTVCNN) is interaction with human CREBBP. Positions 1 to 48 (MDPIDPDLEPWKHPGSQPRTVCNNCYCKACCYHCIYCFTKKGLGISYG) are transactivation. Positions 22, 25, and 27 each coordinate Zn(2+). A cysteine-rich region spans residues 22–37 (CNNCYCKACCYHCIYC). Lysine 28 is modified (N6-acetyllysine; by host PCAF). Residues cysteine 30, histidine 33, cysteine 34, and cysteine 37 each coordinate Zn(2+). A core region spans residues 38-48 (FTKKGLGISYG). The span at 48–58 (GRKKRTTRRRT) shows a compositional bias: basic residues. The tract at residues 48–100 (GRKKRTTRRRTAPAGSKNNQDSIPKQPLSQSRGNKEGSEKSTKEVASKTEADQ) is disordered. The Nuclear localization signal, RNA-binding (TAR), and protein transduction signature appears at 49–57 (RKKRTTRRR). Residues 49-87 (RKKRTTRRRTAPAGSKNNQDSIPKQPLSQSRGNKEGSEK) form an interaction with the host capping enzyme RNGTT region. N6-acetyllysine; by host EP300 and GCN5L2 is present on residues lysine 50 and lysine 51. Arginine 52 carries the asymmetric dimethylarginine; by host PRMT6 modification. Residues 63-79 (SKNNQDSIPKQPLSQSR) show a composition bias toward polar residues. Residue lysine 72 forms a Glycyl lysine isopeptide (Lys-Gly) (interchain with G-Cter in ubiquitin) linkage. Residues 80-100 (GNKEGSEKSTKEVASKTEADQ) are compositionally biased toward basic and acidic residues.

This sequence belongs to the lentiviruses Tat family. As to quaternary structure, interacts with host CCNT1. Associates with the P-TEFb complex composed at least of Tat, P-TEFb (CDK9 and CCNT1), TAR RNA, RNA Pol II. Recruits the HATs CREBBP, TAF1/TFIID, EP300, PCAF and GCN5L2. Interacts with host KAT5/Tip60; this interaction targets the latter to degradation. Interacts with the host deacetylase SIRT1. Interacts with host capping enzyme RNGTT; this interaction stimulates RNGTT. Binds to host KDR, and to the host integrins ITGAV/ITGB3 and ITGA5/ITGB1. Interacts with host KPNB1/importin beta-1 without previous binding to KPNA1/importin alpha-1. Interacts with EIF2AK2. Interacts with host nucleosome assembly protein NAP1L1; this interaction may be required for the transport of Tat within the nucleus, since the two proteins interact at the nuclear rim. Interacts with host C1QBP/SF2P32; this interaction involves lysine-acetylated Tat. Interacts with the host chemokine receptors CCR2, CCR3 and CXCR4. Interacts with host DPP4/CD26; this interaction may trigger an anti-proliferative effect. Interacts with host LDLR. Interacts with the host extracellular matrix metalloproteinase MMP1. Interacts with host PRMT6; this interaction mediates Tat's methylation. Interacts with, and is ubiquitinated by MDM2/Hdm2. Interacts with host PSMC3 and HTATIP2. Interacts with STAB1; this interaction may overcome SATB1-mediated repression of IL2 and IL2RA (interleukin) in T cells by binding to the same domain than HDAC1. Interacts (when acetylated) with human CDK13, thereby increasing HIV-1 mRNA splicing and promoting the production of the doubly spliced HIV-1 protein Nef. Interacts with host TBP; this interaction modulates the activity of transcriptional pre-initiation complex. Interacts with host RELA. Post-translationally, asymmetrical arginine methylation by host PRMT6 seems to diminish the transactivation capacity of Tat and affects the interaction with host CCNT1. In terms of processing, acetylation by EP300, CREBBP, GCN5L2/GCN5 and PCAF regulates the transactivation activity of Tat. EP300-mediated acetylation of Lys-50 promotes dissociation of Tat from the TAR RNA through the competitive binding to PCAF's bromodomain. In addition, the non-acetylated Tat's N-terminus can also interact with PCAF. PCAF-mediated acetylation of Lys-28 enhances Tat's binding to CCNT1. Lys-50 is deacetylated by SIRT1. Polyubiquitination by host MDM2 does not target Tat to degradation, but activates its transactivation function and fosters interaction with CCNT1 and TAR RNA. Post-translationally, phosphorylated by EIF2AK2 on serine and threonine residues adjacent to the basic region important for TAR RNA binding and function. Phosphorylation of Tat by EIF2AK2 is dependent on the prior activation of EIF2AK2 by dsRNA.

It localises to the host nucleus. The protein localises to the host nucleolus. It is found in the host cytoplasm. The protein resides in the secreted. Transcriptional activator that increases RNA Pol II processivity, thereby increasing the level of full-length viral transcripts. Recognizes a hairpin structure at the 5'-LTR of the nascent viral mRNAs referred to as the transactivation responsive RNA element (TAR) and recruits the cyclin T1-CDK9 complex (P-TEFb complex) that will in turn hyperphosphorylate the RNA polymerase II to allow efficient elongation. The CDK9 component of P-TEFb and other Tat-activated kinases hyperphosphorylate the C-terminus of RNA Pol II that becomes stabilized and much more processive. Other factors such as HTATSF1/Tat-SF1, SUPT5H/SPT5, and HTATIP2 are also important for Tat's function. Besides its effect on RNA Pol II processivity, Tat induces chromatin remodeling of proviral genes by recruiting the histone acetyltransferases (HATs) CREBBP, EP300 and PCAF to the chromatin. This also contributes to the increase in proviral transcription rate, especially when the provirus integrates in transcriptionally silent region of the host genome. To ensure maximal activation of the LTR, Tat mediates nuclear translocation of NF-kappa-B by interacting with host RELA. Through its interaction with host TBP, Tat may also modulate transcription initiation. Tat can reactivate a latently infected cell by penetrating in it and transactivating its LTR promoter. In the cytoplasm, Tat is thought to act as a translational activator of HIV-1 mRNAs. Its function is as follows. Extracellular circulating Tat can be endocytosed by surrounding uninfected cells via the binding to several surface receptors such as CD26, CXCR4, heparan sulfate proteoglycans (HSPG) or LDLR. Neurons are rarely infected, but they internalize Tat via their LDLR. Through its interaction with nuclear HATs, Tat is potentially able to control the acetylation-dependent cellular gene expression. Modulates the expression of many cellular genes involved in cell survival, proliferation or in coding for cytokines or cytokine receptors. Tat plays a role in T-cell and neurons apoptosis. Tat induced neurotoxicity and apoptosis probably contribute to neuroAIDS. Circulating Tat also acts as a chemokine-like and/or growth factor-like molecule that binds to specific receptors on the surface of the cells, affecting many cellular pathways. In the vascular system, Tat binds to ITGAV/ITGB3 and ITGA5/ITGB1 integrins dimers at the surface of endothelial cells and competes with bFGF for heparin-binding sites, leading to an excess of soluble bFGF. The polypeptide is Protein Tat (Pan (chimpanzees)).